A 184-amino-acid polypeptide reads, in one-letter code: Mitochondrial import inner membrane translocase subunit Tim22 (184 aa).

Disulfide bonds link Cys59–Cys131 and Cys150–Cys169. Helical transmembrane passes span 64 to 84 (ALACVGGFVLGGAFGVFTAGI), 115 to 133 (YAKNFAIVGAMFSCTECLV), and 160 to 180 (AGLKAGVLGCGGFAAFSAVID).

The protein belongs to the Tim17/Tim22/Tim23 family. Core component of the TIM22 complex.

The protein localises to the mitochondrion inner membrane. Functionally, essential core component of the TIM22 complex, a complex that mediates the import and insertion of multi-pass transmembrane proteins into the mitochondrial inner membrane. In the TIM22 complex, it constitutes the voltage-activated and signal-gated channel. Forms a twin-pore translocase that uses the membrane potential as external driving force in 2 voltage-dependent steps. This is Mitochondrial import inner membrane translocase subunit Tim22 (timm22) from Xenopus laevis (African clawed frog).